A 206-amino-acid chain; its full sequence is MASQKKQLFKIIILGDSGVGKTSLMNQYVNARFTQQYRATVGADFMAKEVMIDDRMVTLQIWDTAGQERFQSLGGAFYRGADCCVLVYDITNPKSFDSLDSWRDEFLMQGQPKDPEHFPFVVLGNKLDKATERKVQESKSQQWCKSHGNIQFFEVSAKDATNIEQAFQDIAKAAASQEKDEEIFFPTTVTLTKQDPKKQTKQGGCC.

15–22 (GDSGVGKT) serves as a coordination point for GTP. Phosphoserine occurs at positions 17 and 23. A phosphothreonine mark is found at Thr-34, Thr-40, and Thr-64. GTP-binding positions include 34–40 (TQQYRAT) and 63–67 (DTAGQ). Positions 37–45 (YRATVGADF) match the Effector region motif. Ser-72 carries the phosphoserine modification. Phosphotyrosine occurs at positions 78 and 88. Residues 125–128 (NKLD) and 157–158 (AK) contribute to the GTP site. S-geranylgeranyl cysteine attachment occurs at residues Cys-205 and Cys-206.

The protein belongs to the small GTPase superfamily. Rab family. Post-translationally, glycosylated.

The protein resides in the cytoplasm. The protein localises to the cytoskeleton. The protein is Ras-related protein Rab-7b of Paramecium octaurelia.